A 254-amino-acid polypeptide reads, in one-letter code: 3-deoxy-manno-octulosonate cytidylyltransferase (254 aa).

It belongs to the KdsB family.

It is found in the cytoplasm. It catalyses the reaction 3-deoxy-alpha-D-manno-oct-2-ulosonate + CTP = CMP-3-deoxy-beta-D-manno-octulosonate + diphosphate. It participates in nucleotide-sugar biosynthesis; CMP-3-deoxy-D-manno-octulosonate biosynthesis; CMP-3-deoxy-D-manno-octulosonate from 3-deoxy-D-manno-octulosonate and CTP: step 1/1. It functions in the pathway bacterial outer membrane biogenesis; lipopolysaccharide biosynthesis. Functionally, activates KDO (a required 8-carbon sugar) for incorporation into bacterial lipopolysaccharide in Gram-negative bacteria. In Geobacter metallireducens (strain ATCC 53774 / DSM 7210 / GS-15), this protein is 3-deoxy-manno-octulosonate cytidylyltransferase.